The chain runs to 88 residues: Kunitz-type U15-theraphotoxin-Hhn1h (88 aa).

Residues 1-27 (MGTARFLRAVLLLSVLLMVTFPALLSA) form the signal peptide. Positions 28–33 (EHHDGR) are excised as a propeptide. Positions 37-85 (CRLPSGSGDCLRFFEMWYFDGTTCTKFVYGGYGGNDNRFPTEKACMKRC) constitute a BPTI/Kunitz inhibitor domain. 2 cysteine pairs are disulfide-bonded: C37–C85 and C60–C81.

It belongs to the venom Kunitz-type family. 03 (sub-Kunitz) subfamily. Expressed by the venom gland.

It is found in the secreted. Serine protease inhibitor that inhibits trypsin at a molar ratio of 1:1. This Cyriopagopus hainanus (Chinese bird spider) protein is Kunitz-type U15-theraphotoxin-Hhn1h.